The chain runs to 228 residues: 30 kDa heat shock protein (228 aa).

3 disordered regions span residues 34 to 53 (EVQGSAPETGSRRHTQPTRT), 117 to 136 (KGEPHSPAAHHATVEDDVDE), and 144 to 174 (TATGANNQNNQQVAQRASAPTTEEKPKAPAE). In terms of domain architecture, sHSP spans 49 to 228 (QPTRTFSPKF…KHETIRIAIN (180 aa)). The segment covering 144 to 158 (TATGANNQNNQQVAQ) has biased composition (low complexity).

It belongs to the small heat shock protein (HSP20) family.

It localises to the cytoplasm. In Neurospora crassa (strain ATCC 24698 / 74-OR23-1A / CBS 708.71 / DSM 1257 / FGSC 987), this protein is 30 kDa heat shock protein (hsp30).